The following is a 563-amino-acid chain: Arginine--tRNA ligase (563 aa).

The short motif at 121–131 (PNIAKPFSIGH) is the 'HIGH' region element.

It belongs to the class-I aminoacyl-tRNA synthetase family. As to quaternary structure, monomer.

The protein resides in the cytoplasm. The enzyme catalyses tRNA(Arg) + L-arginine + ATP = L-arginyl-tRNA(Arg) + AMP + diphosphate. This Streptococcus pyogenes serotype M18 (strain MGAS8232) protein is Arginine--tRNA ligase.